A 220-amino-acid chain; its full sequence is MOB kinase activator-like 3 (220 aa).

Zn(2+)-binding residues include C83, C88, H165, and H170.

It belongs to the MOB1/phocein family.

This is MOB kinase activator-like 3 (Mob3) from Drosophila melanogaster (Fruit fly).